The following is a 299-amino-acid chain: Putative ammonium transporter 4 member 1 (299 aa).

A run of 5 helical transmembrane segments spans residues 16–36 (AWPL…LVIL), 59–79 (VLLT…GFNG), 104–124 (LLVW…ISAV), 158–178 (VLHT…LLLL), and 218–238 (AGIA…CLAV).

This sequence belongs to the ammonia transporter channel (TC 1.A.11.2) family.

The protein resides in the membrane. In Oryza sativa subsp. japonica (Rice), this protein is Putative ammonium transporter 4 member 1 (AMT4-1).